The primary structure comprises 84 residues: Replication regulatory protein repA2 (84 aa).

Residues 1–13 (MSQTENAVTSSSG) are compositionally biased toward polar residues. Residues 1-31 (MSQTENAVTSSSGAKRAYRKGNPLSDAEKQR) form a disordered region.

This protein is involved in the determination of copy number in gene replication. It binds to the repA promoter thus inhibiting the synthesis of the mRNA for the initiator protein repA. The polypeptide is Replication regulatory protein repA2 (repA2) (Escherichia coli O157:H7).